Consider the following 750-residue polypeptide: Photosystem I P700 chlorophyll a apoprotein A1 (750 aa).

The next 8 membrane-spanning stretches (helical) occupy residues 70 to 93 (VFSA…FHGA), 156 to 179 (LYCT…FHYH), 195 to 219 (LNHH…HVSL), 291 to 309 (IAHH…GHMY), 346 to 369 (WHAQ…HHMY), 385 to 411 (LSLF…IFMV), 433 to 455 (AIIS…LYIH), and 531 to 549 (FLVH…LILL). [4Fe-4S] cluster is bound by residues C573 and C582. 2 consecutive transmembrane segments (helical) span residues 589 to 610 (HVFL…HFSW) and 664 to 686 (LSAY…MFLF). H675 is a chlorophyll a' binding site. The chlorophyll a site is built by M683 and Y691. W692 lines the phylloquinone pocket. The chain crosses the membrane as a helical span at residues 724-744 (AVGVTHYLLGGIATTWAFFLA).

It belongs to the PsaA/PsaB family. The PsaA/B heterodimer binds the P700 chlorophyll special pair and subsequent electron acceptors. PSI consists of a core antenna complex that captures photons, and an electron transfer chain that converts photonic excitation into a charge separation. The eukaryotic PSI reaction center is composed of at least 11 subunits. Requires P700 is a chlorophyll a/chlorophyll a' dimer, A0 is one or more chlorophyll a, A1 is one or both phylloquinones and FX is a shared 4Fe-4S iron-sulfur center. as cofactor.

It is found in the plastid. The protein resides in the chloroplast thylakoid membrane. The catalysed reaction is reduced [plastocyanin] + hnu + oxidized [2Fe-2S]-[ferredoxin] = oxidized [plastocyanin] + reduced [2Fe-2S]-[ferredoxin]. Functionally, psaA and PsaB bind P700, the primary electron donor of photosystem I (PSI), as well as the electron acceptors A0, A1 and FX. PSI is a plastocyanin-ferredoxin oxidoreductase, converting photonic excitation into a charge separation, which transfers an electron from the donor P700 chlorophyll pair to the spectroscopically characterized acceptors A0, A1, FX, FA and FB in turn. Oxidized P700 is reduced on the lumenal side of the thylakoid membrane by plastocyanin. The protein is Photosystem I P700 chlorophyll a apoprotein A1 of Lobularia maritima (Sweet alyssum).